The chain runs to 135 residues: Putative pre-16S rRNA nuclease (135 aa).

This sequence belongs to the YqgF nuclease family.

It is found in the cytoplasm. Its function is as follows. Could be a nuclease involved in processing of the 5'-end of pre-16S rRNA. The chain is Putative pre-16S rRNA nuclease from Clostridium novyi (strain NT).